An 84-amino-acid chain; its full sequence is Small ribosomal subunit protein bS20 (84 aa).

The segment at 1–25 is disordered; the sequence is MANIVSNEKTYRHTQKVRKENHAKM.

Belongs to the bacterial ribosomal protein bS20 family.

Binds directly to 16S ribosomal RNA. The sequence is that of Small ribosomal subunit protein bS20 from Ureaplasma urealyticum serovar 10 (strain ATCC 33699 / Western).